We begin with the raw amino-acid sequence, 100 residues long: MAPFVRNLVEKTPALVNAAVTYLKPRLAAFWYYTTVELVPPTPAEIPRAIQSLKKIVSSAQTGSFKQLTVKEALLNGLVATEVSTWFYVREITGKRGIIG.

This sequence belongs to the ATPase g subunit family. In terms of assembly, F-type ATPases have 2 components, CF(1) - the catalytic core - and CF(0) - the membrane proton channel. CF(0) seems to have nine subunits: a, b, c, d, e, f, g, F6 and 8 (or A6L).

It is found in the mitochondrion membrane. Functionally, mitochondrial membrane ATP synthase (F(1)F(0) ATP synthase or Complex V) produces ATP from ADP in the presence of a proton gradient across the membrane which is generated by electron transport complexes of the respiratory chain. F-type ATPases consist of two structural domains, F(1) - containing the extramembraneous catalytic core, and F(0) - containing the membrane proton channel, linked together by a central stalk and a peripheral stalk. During catalysis, ATP synthesis in the catalytic domain of F(1) is coupled via a rotary mechanism of the central stalk subunits to proton translocation. Part of the complex F(0) domain. Minor subunit located with subunit a in the membrane. The protein is ATP synthase subunit g 2, mitochondrial of Homo sapiens (Human).